A 765-amino-acid polypeptide reads, in one-letter code: Probable glycosyltransferase STELLO2 (765 aa).

Residues 1–43 lie on the Cytoplasmic side of the membrane; that stretch reads MLVQDRVAPKPPKSRIRELPSRDRFAEPKILDFSSWVSDNVYR. The chain crosses the membrane as a helical span at residues 44–64; it reads IVIIFLFIVTVAAFFFLYNTT. Over 65-765 the chain is Lumenal; it reads DTASLLCFQS…EGDPLLMELV (701 aa). N-linked (GlcNAc...) asparagine glycans are attached at residues asparagine 235 and asparagine 723.

Belongs to the STELLO family. In terms of assembly, homo- and heterodimer with STL1. Interacts with CESA1, CESA3, CESA4, CESA6, CESA7 and CESA8, but not with GOT1. In terms of tissue distribution, expressed in cells that are expanding or producing secondary cell walls.

The protein localises to the golgi apparatus membrane. Probable glycosyltransferase regulating the assembly and trafficking of cellulose synthase complexes. This is Probable glycosyltransferase STELLO2 from Arabidopsis thaliana (Mouse-ear cress).